The following is a 325-amino-acid chain: SPbeta prophage-derived uncharacterized protein YopR (325 aa).

The sequence is that of SPbeta prophage-derived uncharacterized protein YopR (yopR) from Bacillus subtilis (strain 168).